A 104-amino-acid polypeptide reads, in one-letter code: Conantokin-P (104 aa).

The first 26 residues, 1-26 (MQLYTYLYLLVPLVTFHLILSTGTLA), serve as a signal peptide directing secretion. A propeptide spanning residues 27–80 (HGGTLTERRSTDTTALKPEPVLLQKSDARSTDDNDKDRLTQMKRILKKRGNKAR) is cleaved from the precursor. A disordered region spans residues 29-87 (GTLTERRSTDTTALKPEPVLLQKSDARSTDDNDKDRLTQMKRILKKRGNKARGEEEHSK). Positions 52-66 (SDARSTDDNDKDRLT) are enriched in basic and acidic residues. 4-carboxyglutamate occurs at positions 83, 84, 90, 94, and 103. A divalent metal cation contacts are provided by E90 and E94. Residues C91 and C104 are joined by a disulfide bond.

It belongs to the conotoxin B superfamily. As to expression, expressed by the venom duct.

The protein resides in the secreted. Conantokins inhibit N-methyl-D-aspartate (NMDA) receptors. This toxin has the highest potency for the NR2B/GRIN2B subunit, followed by NR2A/GRIN2A, NR2C/GRIN2C, and NR2D/GRIN2D subunits. This is Conantokin-P from Conus purpurascens (Purple cone).